Reading from the N-terminus, the 1374-residue chain is Probable multidrug resistance-associated protein lethal(2)03659 (1374 aa).

The disordered stretch occupies residues 1–40 (MDKQPVLEPTFDSVSERENTSIEESSLLENNGFDHRNKDE). 6 helical membrane passes run 159–179 (LLRVFGWQLGFPGLAIFVVEL), 205–225 (AGFYYAVAQIVISALTVMILT), 282–302 (YTVHYLWVGPLQVLVITYLMY), 305–325 (IGISAVFGVLFMLLFMPIQMY), 404–424 (IFLSLVGYVILGKVFTPEIAF), and 426–446 (ITAYYNVLLAAMSIYVPSAII). The region spanning 168–449 (GFPGLAIFVV…YVPSAIIQTA (282 aa)) is the ABC transmembrane type-1 1 domain. A disordered region spans residues 466–492 (ELGSSDKSEGPSKDTVPGNPPSNNNEA). In terms of domain architecture, ABC transporter 1 spans 499–722 (ISIRDLKAKW…GLITGLGSLS (224 aa)). 534–541 (GLTGSGKS) provides a ligand contact to ATP. An N-linked (GlcNAc...) asparagine glycan is attached at Asn561. The tract at residues 723–766 (KTDKAKTEEQEPLNLNSPDNKNEVTPIKENSEQTVGGSSSGKEH) is disordered. The next 5 helical transmembrane spans lie at 787–807 (GGGLVAFLVMLSSSVLAQVAV), 845–865 (LIIILSVIMNLSSSFLLFNIA), 913–933 (VVLVDVMQIALWLAGIIIVIA), 938–958 (LLLVPTLMLSVIFYHLRNLYL), and 1025–1045 (YCMNCICVIYISIITLSFFAF). The 287-residue stretch at 793–1079 (FLVMLSSSVL…GVRQTAELEN (287 aa)) folds into the ABC transmembrane type-1 2 domain. The ABC transporter 2 domain occupies 1119–1352 (FKELNLRYTP…SDSKVFHNLV (234 aa)). ATP is bound at residue 1153–1160 (GRTGAGKS). Asn1254 and Asn1353 each carry an N-linked (GlcNAc...) asparagine glycan.

It belongs to the ABC transporter superfamily. ABCC family. Conjugate transporter (TC 3.A.1.208) subfamily. In terms of tissue distribution, uniform expression in embryos.

It is found in the membrane. Vital for development. This chain is Probable multidrug resistance-associated protein lethal(2)03659 (l(2)03659), found in Drosophila melanogaster (Fruit fly).